Here is a 281-residue protein sequence, read N- to C-terminus: 4-diphosphocytidyl-2-C-methyl-D-erythritol kinase (281 aa).

Residue K15 is part of the active site. An ATP-binding site is contributed by 98–108 (PTGAGLGGGSS). D140 is an active-site residue.

The protein belongs to the GHMP kinase family. IspE subfamily.

It carries out the reaction 4-CDP-2-C-methyl-D-erythritol + ATP = 4-CDP-2-C-methyl-D-erythritol 2-phosphate + ADP + H(+). Its pathway is isoprenoid biosynthesis; isopentenyl diphosphate biosynthesis via DXP pathway; isopentenyl diphosphate from 1-deoxy-D-xylulose 5-phosphate: step 3/6. Functionally, catalyzes the phosphorylation of the position 2 hydroxy group of 4-diphosphocytidyl-2C-methyl-D-erythritol. The polypeptide is 4-diphosphocytidyl-2-C-methyl-D-erythritol kinase (Neisseria meningitidis serogroup B (strain ATCC BAA-335 / MC58)).